The sequence spans 416 residues: Diaminopimelate decarboxylase (416 aa).

Position 60 is an N6-(pyridoxal phosphate)lysine (K60). Pyridoxal 5'-phosphate contacts are provided by residues G240 and 274-277; that span reads EPGR. Substrate is bound by residues R277, R313, and Y317. C343 functions as the Proton donor in the catalytic mechanism. Substrate contacts are provided by E344 and Y371. A pyridoxal 5'-phosphate-binding site is contributed by Y371.

Belongs to the Orn/Lys/Arg decarboxylase class-II family. LysA subfamily. In terms of assembly, homodimer. Requires pyridoxal 5'-phosphate as cofactor.

It catalyses the reaction meso-2,6-diaminopimelate + H(+) = L-lysine + CO2. Its pathway is amino-acid biosynthesis; L-lysine biosynthesis via DAP pathway; L-lysine from DL-2,6-diaminopimelate: step 1/1. Its function is as follows. Specifically catalyzes the decarboxylation of meso-diaminopimelate (meso-DAP) to L-lysine. In Pseudomonas fluorescens, this protein is Diaminopimelate decarboxylase.